A 123-amino-acid polypeptide reads, in one-letter code: F-box protein PP2-B3 (123 aa).

Residues 10–56 enclose the F-box domain; sequence PSPFDGLPENCISNIISFTTPRDACFAASVSKAFESAVQSDSVWEKF.

The chain is F-box protein PP2-B3 (PP2B3) from Arabidopsis thaliana (Mouse-ear cress).